Consider the following 350-residue polypeptide: Secreted effector protein PipB2 (350 aa).

Pentapeptide repeat domains lie at 162–201 (ANLT…NLSG), 202–241 (TSLG…SLLG), 247–286 (CNCS…IMED), and 287–326 (AVLT…TLTH).

In terms of assembly, interacts with the host kinesin light chain (KLC), a subunit of the kinesin-1 motor complex.

The protein localises to the secreted. Its subcellular location is the host membrane. Effector proteins function to alter host cell physiology and promote bacterial survival in host tissues. Involved in the reorganization of late endosome/lysosome (LE/Lys) compartments in mammalian cells. Necessary and sufficient to link kinesin-1 onto the Salmonella-containing vacuole (SCV) membrane. Required for centrifugal extension of lysosomal glycoprotein-rich membrane tubules, known as Salmonella-induced filaments (Sifs), away from the SCV and toward the cell periphery. Required for virulence, but not for intracellular survival and replication in phagocytic cells. The chain is Secreted effector protein PipB2 (pipB2) from Salmonella choleraesuis (strain SC-B67).